We begin with the raw amino-acid sequence, 190 residues long: MKRLISCLTIICALNASAAAETTSNPCSRWISFLKPVCQRFHQTWTEGHDDMYFSGYAWHNRYVYSNEKIKSYNETAWGGGLGKSLFDEKGNWHGLYAIAFLDSHRHLEPAVGYAYLKTASVNKDLKAGLGYSVLVTSRVDYDNVPIPGALPWAALFYKRITIAATYIPGSSREGHENGNVLYMLGKISL.

The signal sequence occupies residues 1–18 (MKRLISCLTIICALNASA). Active-site residues include His-60, Asp-103, and Ser-104.

It belongs to the lipid A palmitoyltransferase family. As to quaternary structure, homodimer.

Its subcellular location is the cell outer membrane. It catalyses the reaction a lipid A + a 1,2-diacyl-sn-glycero-3-phosphocholine = a hepta-acyl lipid A + a 2-acyl-sn-glycero-3-phosphocholine. The enzyme catalyses a lipid IVA + a 1,2-diacyl-sn-glycero-3-phosphocholine = a lipid IVB + a 2-acyl-sn-glycero-3-phosphocholine. The catalysed reaction is a lipid IIA + a 1,2-diacyl-sn-glycero-3-phosphocholine = a lipid IIB + a 2-acyl-sn-glycero-3-phosphocholine. Transfers a fatty acid residue from the sn-1 position of a phospholipid to the N-linked hydroxyfatty acid chain on the proximal unit of lipid A or its precursors. The protein is Lipid A acyltransferase PagP of Legionella pneumophila (strain Paris).